The chain runs to 527 residues: Bifunctional purine biosynthesis protein PurH (527 aa).

Residues 1–149 form the MGS-like domain; that stretch reads MASDFLPVRR…KNFARVAVAT (149 aa).

This sequence belongs to the PurH family.

The enzyme catalyses (6R)-10-formyltetrahydrofolate + 5-amino-1-(5-phospho-beta-D-ribosyl)imidazole-4-carboxamide = 5-formamido-1-(5-phospho-D-ribosyl)imidazole-4-carboxamide + (6S)-5,6,7,8-tetrahydrofolate. The catalysed reaction is IMP + H2O = 5-formamido-1-(5-phospho-D-ribosyl)imidazole-4-carboxamide. The protein operates within purine metabolism; IMP biosynthesis via de novo pathway; 5-formamido-1-(5-phospho-D-ribosyl)imidazole-4-carboxamide from 5-amino-1-(5-phospho-D-ribosyl)imidazole-4-carboxamide (10-formyl THF route): step 1/1. It participates in purine metabolism; IMP biosynthesis via de novo pathway; IMP from 5-formamido-1-(5-phospho-D-ribosyl)imidazole-4-carboxamide: step 1/1. The protein is Bifunctional purine biosynthesis protein PurH of Xanthomonas oryzae pv. oryzae (strain KACC10331 / KXO85).